We begin with the raw amino-acid sequence, 139 residues long: Putative nickel-responsive regulator (139 aa).

Ni(2+) is bound by residues H79, H90, H92, and C98.

It belongs to the transcriptional regulatory CopG/NikR family. Ni(2+) is required as a cofactor.

Transcriptional regulator. The chain is Putative nickel-responsive regulator from Nitratidesulfovibrio vulgaris (strain ATCC 29579 / DSM 644 / CCUG 34227 / NCIMB 8303 / VKM B-1760 / Hildenborough) (Desulfovibrio vulgaris).